A 280-amino-acid polypeptide reads, in one-letter code: Meiotic spindle formation protein 2 (280 aa).

The interval 1–104 (MSGLDDRKKL…LPKSSPESSV (104 aa)) is disordered. Residues 72–92 (LHSESKKELSRNPVSRGEEHS) show a composition bias toward basic and acidic residues. Positions 93–104 (SSLPKSSPESSV) are enriched in low complexity.

As to quaternary structure, interacts with mei-1.

It is found in the cytoplasm. The protein localises to the cytoskeleton. The protein resides in the spindle pole. In terms of biological role, forms a heterodimeric complex in conjunction with mei-1 which severs microtubules in vitro in an ATP-dependent manner. This activity may promote rapid reorganization of cellular microtubule arrays. May act to target mei-1 within the cell. Required specifically for meiotic spindle formation in the female germline. The sequence is that of Meiotic spindle formation protein 2 (mei-2) from Caenorhabditis elegans.